A 156-amino-acid polypeptide reads, in one-letter code: Lipoprotein signal peptidase (156 aa).

The next 2 helical transmembrane spans lie at 57-77 (LFLI…LFIN) and 83-103 (ILKI…IDRI). Residues Asp110 and Asp129 contribute to the active site. The chain crosses the membrane as a helical span at residues 124-144 (IFNIADVLVSLGTILLIIFII).

The protein belongs to the peptidase A8 family.

The protein localises to the cell membrane. It catalyses the reaction Release of signal peptides from bacterial membrane prolipoproteins. Hydrolyzes -Xaa-Yaa-Zaa-|-(S,diacylglyceryl)Cys-, in which Xaa is hydrophobic (preferably Leu), and Yaa (Ala or Ser) and Zaa (Gly or Ala) have small, neutral side chains.. It functions in the pathway protein modification; lipoprotein biosynthesis (signal peptide cleavage). This protein specifically catalyzes the removal of signal peptides from prolipoproteins. The chain is Lipoprotein signal peptidase from Clostridium tetani (strain Massachusetts / E88).